Reading from the N-terminus, the 824-residue chain is Disintegrin and metalloproteinase domain-containing protein 17 (824 aa).

The N-terminal stretch at 1–17 is a signal peptide; it reads MRQSLLFLTSVVPFVLA. A propeptide spanning residues 18–214 is cleaved from the precursor; that stretch reads PRPPDDPGFG…PEELVHRVKR (197 aa). N-linked (GlcNAc...) asparagine glycans are attached at residues Asn-103, Asn-157, and Asn-174. The short motif at 182 to 189 is the Cysteine switch element; sequence KVCGYLKV. A Zn(2+)-binding site is contributed by Cys-184. The Extracellular segment spans residues 215–671; the sequence is RADPDPMKNT…NTFGKFLADN (457 aa). Residues 223–474 form the Peptidase M12B domain; the sequence is NTCKLLVVAD…KAQECFQERS (252 aa). Cystine bridges form between Cys-225–Cys-333, Cys-365–Cys-469, and Cys-423–Cys-453. N-linked (GlcNAc...) asparagine glycosylation is present at Asn-264. His-405 provides a ligand contact to Zn(2+). Glu-406 is a catalytic residue. Residues His-409 and His-415 each contribute to the Zn(2+) site. Residues Asn-452, Asn-498, Asn-539, and Asn-551 are each glycosylated (N-linked (GlcNAc...) asparagine). In terms of domain architecture, Disintegrin spans 475–563; sequence NKVCGNSRVD…ECPPPGNAED (89 aa). Intrachain disulfides connect Cys-534–Cys-555, Cys-573–Cys-582, Cys-578–Cys-591, and Cys-593–Cys-600. N-linked (GlcNAc...) asparagine glycosylation occurs at Asn-594. Residues 603 to 671 are crambin-like; sequence CCRDLSGRCV…NTFGKFLADN (69 aa). A helical transmembrane segment spans residues 672–692; that stretch reads IVGSVLVFSLIFWIPFSILVH. Over 693–824 the chain is Cytoplasmic; the sequence is CVDKKLDKQY…NRVDSKETEC (132 aa). 2 consecutive short sequence motifs (SH3-binding) follow at residues 731–738 and 741–748; these read PAPQTPGR and PAPVIPSA. A disordered region spans residues 732 to 824; sequence APQTPGRLQP…NRVDSKETEC (93 aa). Thr-735 is subject to Phosphothreonine; by MAPK14. The segment covering 741–752 has biased composition (low complexity); sequence PAPVIPSAPAAP. Thr-761 carries the phosphothreonine modification. Ser-767 is subject to Phosphoserine. Composition is skewed to basic and acidic residues over residues 768–781, 791–807, and 815–824; these read TDSH…EKDP, SFED…EKAA, and NRVDSKETEC. 2 positions are modified to phosphoserine: Ser-791 and Ser-819.

As to quaternary structure, interacts with MAD2L1, MAPK14 and MUC1. Interacts with iRhom1/RHBDF1 and iRhom2/RHBDF2. Interacts with FRMD8 via its interaction with iRhom1/RHBDF1 and iRhom2/RHBDF2. Interacts with TSPAN8. The cofactor is Zn(2+). The precursor is cleaved by a furin endopeptidase. Post-translationally, phosphorylated. Stimulation by growth factor or phorbol 12-myristate 13-acetate induces phosphorylation of Ser-819 but decreases phosphorylation of Ser-791. Phosphorylation at Thr-735 by MAPK14 is required for ADAM17-mediated ectodomain shedding. Ubiquitously expressed. Expressed at highest levels in adult heart, placenta, skeletal muscle, pancreas, spleen, thymus, prostate, testes, ovary and small intestine, and in fetal brain, lung, liver and kidney. Expressed in natural killer cells (at protein level).

The protein localises to the cell membrane. The enzyme catalyses Narrow endopeptidase specificity. Cleaves Pro-Leu-Ala-Gln-Ala-|-Val-Arg-Ser-Ser-Ser in the membrane-bound, 26-kDa form of tumor necrosis factor alpha (TNFalpha). Similarly cleaves other membrane-anchored, cell-surface proteins to 'shed' the extracellular domains.. Its function is as follows. Transmembrane metalloprotease which mediates the ectodomain shedding of a myriad of transmembrane proteins including adhesion proteins, growth factor precursors and cytokines important for inflammation and immunity. Cleaves the membrane-bound precursor of TNF-alpha to its mature soluble form. Responsible for the proteolytical release of soluble JAM3 from endothelial cells surface. Responsible for the proteolytic release of several other cell-surface proteins, including p75 TNF-receptor, interleukin 1 receptor type II, p55 TNF-receptor, transforming growth factor-alpha, L-selectin, growth hormone receptor, MUC1 and the amyloid precursor protein. Acts as an activator of Notch pathway by mediating cleavage of Notch, generating the membrane-associated intermediate fragment called Notch extracellular truncation (NEXT). Plays a role in the proteolytic processing of ACE2. Plays a role in hemostasis through shedding of GP1BA, the platelet glycoprotein Ib alpha chain. Mediates the proteolytic cleavage of LAG3, leading to release the secreted form of LAG3. Mediates the proteolytic cleavage of IL6R, leading to the release of secreted form of IL6R. Mediates the proteolytic cleavage and shedding of FCGR3A upon NK cell stimulation, a mechanism that allows for increased NK cell motility and detachment from opsonized target cells. Cleaves TREM2, resulting in shedding of the TREM2 ectodomain. The polypeptide is Disintegrin and metalloproteinase domain-containing protein 17 (Homo sapiens (Human)).